The sequence spans 408 residues: Translation initiation factor 2 subunit gamma (408 aa).

Positions 4–201 (QSEINIGLVG…TIEERIKTPK (198 aa)) constitute a tr-type G domain. Positions 13 to 20 (GHVDHGKT) are G1. Positions 16, 20, 41, and 43 each coordinate Mg(2+). 16–21 (DHGKTT) is a binding site for GTP. Residues 41–45 (GISIR) are G2. Zn(2+)-binding residues include Cys-56, Cys-59, Cys-71, and Cys-74. The interval 88 to 91 (DAPG) is G3. GTP is bound by residues 144–147 (NKID) and 179–181 (SAQ). The interval 144-147 (NKID) is G4. The interval 179-181 (SAQ) is G5.

Belongs to the TRAFAC class translation factor GTPase superfamily. Classic translation factor GTPase family. EIF2G subfamily. As to quaternary structure, heterotrimer composed of an alpha, a beta and a gamma chain. It depends on Mg(2+) as a cofactor.

It carries out the reaction GTP + H2O = GDP + phosphate + H(+). EIF-2 functions in the early steps of protein synthesis by forming a ternary complex with GTP and initiator tRNA. In Methanothermobacter thermautotrophicus (strain ATCC 29096 / DSM 1053 / JCM 10044 / NBRC 100330 / Delta H) (Methanobacterium thermoautotrophicum), this protein is Translation initiation factor 2 subunit gamma.